Consider the following 484-residue polypeptide: PTS system MurNAc-GlcNAc-specific EIIBC component (484 aa).

Residues 5 to 87 enclose the PTS EIIB type-1 domain; that stretch reads QQLAERIIAA…AELSGVKLGD (83 aa). The active-site Phosphocysteine intermediate; for EIIB activity is the cysteine 27. The PTS EIIC type-1 domain occupies 130 to 484; sequence KSIANIFIPL…AMRQTDLLGD (355 aa). The next 10 helical transmembrane spans lie at 135 to 155, 160 to 180, 200 to 220, 234 to 254, 274 to 294, 305 to 325, 349 to 369, 384 to 404, 408 to 428, and 450 to 470; these read IFIP…IAAV, MVAG…FNVI, FGAT…TGIA, LQPG…LSIV, IALL…AGFV, IISI…LPLV, LLPI…ALWV, ALPV…TLPL, FLTA…IGHI, and LGYI…TYLF.

Its subcellular location is the cell membrane. The catalysed reaction is N-acetyl-beta-D-muramate-(1-&gt;4)-N-acetyl-D-glucosamine(out) + N(pros)-phospho-L-histidyl-[protein] = 6-phospho-N-acetyl-beta-D-muramate-(1-&gt;4)-N-acetyl-D-glucosamine(in) + L-histidyl-[protein]. It functions in the pathway cell wall biogenesis; peptidoglycan recycling. Functionally, the phosphoenolpyruvate-dependent sugar phosphotransferase system (sugar PTS), a major carbohydrate active transport system, catalyzes the phosphorylation of incoming sugar substrates concomitantly with their translocation across the cell membrane. This system is involved in the uptake and phosphorylation of MurNAc-GlcNAc, the principle peptidoglycan turnover product of S.aureus, yielding cytoplasmic MurNAc 6P-GlcNAc. The polypeptide is PTS system MurNAc-GlcNAc-specific EIIBC component (Staphylococcus aureus (strain Mu50 / ATCC 700699)).